The chain runs to 228 residues: ATP-dependent dethiobiotin synthetase BioD (228 aa).

Residue 12–17 (EIGKTT) participates in ATP binding. T16 is a binding site for Mg(2+). The active site involves K37. A substrate-binding site is contributed by S41. ATP is bound by residues D54, 116-119 (EGAG), and 205-207 (PRL). Mg(2+) contacts are provided by D54 and E116.

This sequence belongs to the dethiobiotin synthetase family. Homodimer. It depends on Mg(2+) as a cofactor.

It localises to the cytoplasm. The catalysed reaction is (7R,8S)-7,8-diammoniononanoate + CO2 + ATP = (4R,5S)-dethiobiotin + ADP + phosphate + 3 H(+). The protein operates within cofactor biosynthesis; biotin biosynthesis; biotin from 7,8-diaminononanoate: step 1/2. Its function is as follows. Catalyzes a mechanistically unusual reaction, the ATP-dependent insertion of CO2 between the N7 and N8 nitrogen atoms of 7,8-diaminopelargonic acid (DAPA, also called 7,8-diammoniononanoate) to form a ureido ring. The protein is ATP-dependent dethiobiotin synthetase BioD of Pseudomonas aeruginosa (strain LESB58).